The sequence spans 77 residues: Acyl carrier protein (77 aa).

The region spanning 2–77 is the Carrier domain; that stretch reads SDVAKRVKEI…DAIDYITEHT (76 aa). O-(pantetheine 4'-phosphoryl)serine is present on Ser-37.

Belongs to the acyl carrier protein (ACP) family. Post-translationally, 4'-phosphopantetheine is transferred from CoA to a specific serine of apo-ACP by AcpS. This modification is essential for activity because fatty acids are bound in thioester linkage to the sulfhydryl of the prosthetic group.

It localises to the cytoplasm. It participates in lipid metabolism; fatty acid biosynthesis. Its function is as follows. Carrier of the growing fatty acid chain in fatty acid biosynthesis. This Trichlorobacter lovleyi (strain ATCC BAA-1151 / DSM 17278 / SZ) (Geobacter lovleyi) protein is Acyl carrier protein.